The primary structure comprises 485 residues: Glutamate--tRNA ligase (485 aa).

Positions 11 to 21 (PSPTGHLHIGN) match the 'HIGH' region motif. The 'KMSKS' region motif lies at 252 to 256 (KLSKR). Lys-255 provides a ligand contact to ATP.

Belongs to the class-I aminoacyl-tRNA synthetase family. Glutamate--tRNA ligase type 1 subfamily. Monomer.

The protein resides in the cytoplasm. It carries out the reaction tRNA(Glu) + L-glutamate + ATP = L-glutamyl-tRNA(Glu) + AMP + diphosphate. Catalyzes the attachment of glutamate to tRNA(Glu) in a two-step reaction: glutamate is first activated by ATP to form Glu-AMP and then transferred to the acceptor end of tRNA(Glu). The protein is Glutamate--tRNA ligase of Bacillus cytotoxicus (strain DSM 22905 / CIP 110041 / 391-98 / NVH 391-98).